We begin with the raw amino-acid sequence, 1282 residues long: Trafficking protein particle complex subunit 8 (1282 aa).

The segment at 245–287 (TDAIAPGPNGASNQQSPSSPTSSVATISSTMPAVGSVSPNSHP) is disordered. Residues 255–273 (ASNQQSPSSPTSSVATISS) show a composition bias toward low complexity.

In terms of biological role, plays a role in endoplasmic reticulum to Golgi apparatus trafficking at a very early stage. Involved in collagen secretion. The polypeptide is Trafficking protein particle complex subunit 8 (Caenorhabditis elegans).